The following is a 443-amino-acid chain: Dynein regulatory complex protein 9 (443 aa).

2 disordered regions span residues 1–40 and 415–443; these read MEEDSQEDSNLPPKVWHSEMTVSVTGKPPSTVEEDGLPKE and GFKMPKDKVDSKDSKGKGKGKDKRRGKKK. Residues 393 to 422 form the IQ domain; sequence ELKSVIKLQAWWRGTMIRREIGGFKMPKDK. Residues 415–430 show a composition bias toward basic and acidic residues; it reads GFKMPKDKVDSKDSKG. Over residues 431-443 the composition is skewed to basic residues; the sequence is KGKGKDKRRGKKK.

It belongs to the DRC9 family. Component of the nexin-dynein regulatory complex (N-DRC). Interacts (via IQ domain) with CALM when calcium levels are low. Does not interact with CALM in the presence of Ca(2+). Interacts with the HSP70 proteins HSPA1L and HSPA8. May form a complex with CAMK4 and HSP70.

The protein localises to the cytoplasm. It localises to the cell projection. It is found in the cilium. The protein resides in the flagellum. Its subcellular location is the cytoskeleton. The protein localises to the flagellum axoneme. In terms of biological role, component of the nexin-dynein regulatory complex (N-DRC), a key regulator of ciliary/flagellar motility which maintains the alignment and integrity of the distal axoneme and regulates microtubule sliding in motile axonemes. Binds calmodulin when cellular Ca(2+) levels are low and thereby contributes to the regulation of calcium and calmodulin-dependent protein kinase IV (CAMK4) activity; contributes to the regulation of CAMK4 signaling cascades. Required for normal axoneme assembly in sperm flagella, normal sperm tail formation and for male fertility. In Macaca fascicularis (Crab-eating macaque), this protein is Dynein regulatory complex protein 9 (IQCG).